We begin with the raw amino-acid sequence, 165 residues long: Neurotrophin-3 (165 aa).

The signal sequence occupies residues I1–S3. A propeptide spanning residues T4 to R119 is cleaved from the precursor. Residue N112 is glycosylated (N-linked (GlcNAc...) asparagine).

The protein belongs to the NGF-beta family.

It is found in the secreted. Its function is as follows. Seems to promote the survival of visceral and proprioceptive sensory neurons. In Calabaria reinhardtii (Calabar boa), this protein is Neurotrophin-3 (NTF3).